A 340-amino-acid chain; its full sequence is Glycerol-3-phosphate dehydrogenase [NAD(P)+] (340 aa).

Ser23, Trp24, Arg43, Lys44, and Lys113 together coordinate NADPH. Sn-glycerol 3-phosphate-binding residues include Lys113, Gly141, and Thr143. Ala145 is a binding site for NADPH. 5 residues coordinate sn-glycerol 3-phosphate: Lys196, Asp249, Ser259, Arg260, and Asn261. The active-site Proton acceptor is the Lys196. Arg260 serves as a coordination point for NADPH. Glu286 contacts NADPH.

The protein belongs to the NAD-dependent glycerol-3-phosphate dehydrogenase family.

Its subcellular location is the cytoplasm. It carries out the reaction sn-glycerol 3-phosphate + NAD(+) = dihydroxyacetone phosphate + NADH + H(+). The catalysed reaction is sn-glycerol 3-phosphate + NADP(+) = dihydroxyacetone phosphate + NADPH + H(+). It participates in membrane lipid metabolism; glycerophospholipid metabolism. In terms of biological role, catalyzes the reduction of the glycolytic intermediate dihydroxyacetone phosphate (DHAP) to sn-glycerol 3-phosphate (G3P), the key precursor for phospholipid synthesis. This Zymomonas mobilis subsp. mobilis (strain ATCC 31821 / ZM4 / CP4) protein is Glycerol-3-phosphate dehydrogenase [NAD(P)+].